We begin with the raw amino-acid sequence, 184 residues long: NADH-quinone oxidoreductase subunit B (184 aa).

Residues C37, C38, C103, and C132 each coordinate [4Fe-4S] cluster.

It belongs to the complex I 20 kDa subunit family. NDH-1 is composed of 14 different subunits. Subunits NuoB, C, D, E, F, and G constitute the peripheral sector of the complex. It depends on [4Fe-4S] cluster as a cofactor.

The protein resides in the cell membrane. The catalysed reaction is a quinone + NADH + 5 H(+)(in) = a quinol + NAD(+) + 4 H(+)(out). In terms of biological role, NDH-1 shuttles electrons from NADH, via FMN and iron-sulfur (Fe-S) centers, to quinones in the respiratory chain. The immediate electron acceptor for the enzyme in this species is believed to be a menaquinone. Couples the redox reaction to proton translocation (for every two electrons transferred, four hydrogen ions are translocated across the cytoplasmic membrane), and thus conserves the redox energy in a proton gradient. This chain is NADH-quinone oxidoreductase subunit B, found in Rhodococcus erythropolis (strain PR4 / NBRC 100887).